Consider the following 128-residue polypeptide: Large-conductance mechanosensitive channel (128 aa).

Transmembrane regions (helical) follow at residues 11–31 (FALKGNVLDLAVAVVIGAAFG) and 70–90 (GAFIQSIVDFVIIAFAIFIFV).

Belongs to the MscL family. As to quaternary structure, homopentamer.

The protein resides in the cell membrane. Its function is as follows. Channel that opens in response to stretch forces in the membrane lipid bilayer. May participate in the regulation of osmotic pressure changes within the cell. The sequence is that of Large-conductance mechanosensitive channel from Listeria monocytogenes serotype 4b (strain CLIP80459).